The chain runs to 226 residues: uncharacterized protein (226 aa).

Disordered stretches follow at residues 1–20 (MGAE…AVQT) and 205–226 (LDRK…QRDA).

This is an uncharacterized protein from Treponema pallidum (strain Nichols).